A 265-amino-acid polypeptide reads, in one-letter code: Hydroxyethylthiazole kinase 2 (265 aa).

Methionine 39 serves as a coordination point for substrate. Lysine 115 and threonine 168 together coordinate ATP. Position 195 (glycine 195) interacts with substrate.

The protein belongs to the Thz kinase family. It depends on Mg(2+) as a cofactor.

The enzyme catalyses 5-(2-hydroxyethyl)-4-methylthiazole + ATP = 4-methyl-5-(2-phosphooxyethyl)-thiazole + ADP + H(+). The protein operates within cofactor biosynthesis; thiamine diphosphate biosynthesis; 4-methyl-5-(2-phosphoethyl)-thiazole from 5-(2-hydroxyethyl)-4-methylthiazole: step 1/1. Functionally, catalyzes the phosphorylation of the hydroxyl group of 4-methyl-5-beta-hydroxyethylthiazole (THZ). In Clostridium botulinum (strain Langeland / NCTC 10281 / Type F), this protein is Hydroxyethylthiazole kinase 2.